The sequence spans 331 residues: ATPase GET3 (331 aa).

32 to 39 (KGGVGKTT) is a binding site for ATP. Residue D61 is part of the active site. ATP is bound by residues E235 and N262. Zn(2+)-binding residues include C273 and C276.

This sequence belongs to the arsA ATPase family. In terms of assembly, homodimer.

It localises to the cytoplasm. The protein localises to the endoplasmic reticulum. In terms of biological role, ATPase required for the post-translational delivery of tail-anchored (TA) proteins to the endoplasmic reticulum. Recognizes and selectively binds the transmembrane domain of TA proteins in the cytosol. This complex then targets to the endoplasmic reticulum by membrane-bound receptors, where the tail-anchored protein is released for insertion. This process is regulated by ATP binding and hydrolysis. ATP binding drives the homodimer towards the closed dimer state, facilitating recognition of newly synthesized TA membrane proteins. ATP hydrolysis is required for insertion. Subsequently, the homodimer reverts towards the open dimer state, lowering its affinity for the membrane-bound receptor, and returning it to the cytosol to initiate a new round of targeting. This chain is ATPase GET3, found in Malassezia globosa (strain ATCC MYA-4612 / CBS 7966) (Dandruff-associated fungus).